The sequence spans 469 residues: 3-isopropylmalate dehydratase large subunit (469 aa).

Residues cysteine 349, cysteine 410, and cysteine 413 each contribute to the [4Fe-4S] cluster site.

The protein belongs to the aconitase/IPM isomerase family. LeuC type 1 subfamily. In terms of assembly, heterodimer of LeuC and LeuD. [4Fe-4S] cluster is required as a cofactor.

The enzyme catalyses (2R,3S)-3-isopropylmalate = (2S)-2-isopropylmalate. It functions in the pathway amino-acid biosynthesis; L-leucine biosynthesis; L-leucine from 3-methyl-2-oxobutanoate: step 2/4. In terms of biological role, catalyzes the isomerization between 2-isopropylmalate and 3-isopropylmalate, via the formation of 2-isopropylmaleate. The protein is 3-isopropylmalate dehydratase large subunit of Neisseria gonorrhoeae (strain ATCC 700825 / FA 1090).